Consider the following 91-residue polypeptide: Small ribosomal subunit protein uS19 (91 aa).

This sequence belongs to the universal ribosomal protein uS19 family.

Functionally, protein S19 forms a complex with S13 that binds strongly to the 16S ribosomal RNA. The polypeptide is Small ribosomal subunit protein uS19 (Synechococcus sp. (strain CC9605)).